The chain runs to 213 residues: ATP synthase peripheral stalk subunit OSCP, mitochondrial (213 aa).

The transit peptide at 1-23 directs the protein to the mitochondrion; the sequence is MAAPAASGLSRQVRSFSTSVVRP. Residues 5–23 carry the SIFI-degron motif; it reads AASGLSRQVRSFSTSVVRP. An N6-acetyllysine mark is found at lysine 54, lysine 60, lysine 70, and lysine 73. The residue at position 90 (lysine 90) is an N6-succinyllysine. An N6-acetyllysine; alternate mark is found at lysine 100, lysine 158, and lysine 162. Lysine 100, lysine 158, and lysine 162 each carry N6-succinyllysine; alternate. 3 positions are modified to N6-acetyllysine: lysine 172, lysine 176, and lysine 192. An N6-succinyllysine modification is found at lysine 199.

It belongs to the ATPase delta chain family. In terms of assembly, component of the ATP synthase complex composed at least of ATP5F1A/subunit alpha, ATP5F1B/subunit beta, ATP5MC1/subunit c (homooctomer), MT-ATP6/subunit a, MT-ATP8/subunit 8, ATP5ME/subunit e, ATP5MF/subunit f, ATP5MG/subunit g, ATP5MK/subunit k, ATP5MJ/subunit j, ATP5F1C/subunit gamma, ATP5F1D/subunit delta, ATP5F1E/subunit epsilon, ATP5PF/subunit F6, ATP5PB/subunit b, ATP5PD/subunit d, ATP5PO/subunit OSCP. ATP synthase complex consists of a soluble F(1) head domain (subunits alpha(3) and beta(3)) - the catalytic core - and a membrane F(0) domain - the membrane proton channel (subunits c, a, 8, e, f, g, k and j). These two domains are linked by a central stalk (subunits gamma, delta, and epsilon) rotating inside the F1 region and a stationary peripheral stalk (subunits F6, b, d, and OSCP). Acetylation of Lys-70 and Lys-158 is observed in liver mitochondria from fasted mice but not from fed mice. Post-translationally, acetylation at Lys-162 decreases ATP production. Deacetylated by SIRT3. In terms of processing, in response to mitochondrial stress, the precursor protein is ubiquitinated by the SIFI complex in the cytoplasm before mitochondrial import, leading to its degradation. Within the SIFI complex, UBR4 initiates ubiquitin chain that are further elongated or branched by KCMF1.

Its subcellular location is the mitochondrion. The protein resides in the mitochondrion inner membrane. Functionally, subunit OSCP, of the mitochondrial membrane ATP synthase complex (F(1)F(0) ATP synthase or Complex V) that produces ATP from ADP in the presence of a proton gradient across the membrane which is generated by electron transport complexes of the respiratory chain. ATP synthase complex consist of a soluble F(1) head domain - the catalytic core - and a membrane F(1) domain - the membrane proton channel. These two domains are linked by a central stalk rotating inside the F(1) region and a stationary peripheral stalk. During catalysis, ATP synthesis in the catalytic domain of F(1) is coupled via a rotary mechanism of the central stalk subunits to proton translocation. In vivo, can only synthesize ATP although its ATP hydrolase activity can be activated artificially in vitro. Part of the complex F(0) domain. Part of the complex F(0) domain and the peripheric stalk, which acts as a stator to hold the catalytic alpha(3)beta(3) subcomplex and subunit a/ATP6 static relative to the rotary elements. The chain is ATP synthase peripheral stalk subunit OSCP, mitochondrial from Mus musculus (Mouse).